The sequence spans 379 residues: Carbamoyl phosphate synthase small chain (379 aa).

The CPSase stretch occupies residues 1–188 (MSTPAILALA…ELGKGFTQPE (188 aa)). Residues S47, G240, and G242 each contribute to the L-glutamine site. One can recognise a Glutamine amidotransferase type-1 domain in the interval 192-379 (HVVAYDYGVK…FIELIEAAKK (188 aa)). C269 (nucleophile) is an active-site residue. Residues L270, Q273, N311, G313, and F314 each coordinate L-glutamine. Active-site residues include H353 and E355.

This sequence belongs to the CarA family. In terms of assembly, composed of two chains; the small (or glutamine) chain promotes the hydrolysis of glutamine to ammonia, which is used by the large (or ammonia) chain to synthesize carbamoyl phosphate. Tetramer of heterodimers (alpha,beta)4.

The enzyme catalyses hydrogencarbonate + L-glutamine + 2 ATP + H2O = carbamoyl phosphate + L-glutamate + 2 ADP + phosphate + 2 H(+). It carries out the reaction L-glutamine + H2O = L-glutamate + NH4(+). It functions in the pathway amino-acid biosynthesis; L-arginine biosynthesis; carbamoyl phosphate from bicarbonate: step 1/1. The protein operates within pyrimidine metabolism; UMP biosynthesis via de novo pathway; (S)-dihydroorotate from bicarbonate: step 1/3. Small subunit of the glutamine-dependent carbamoyl phosphate synthetase (CPSase). CPSase catalyzes the formation of carbamoyl phosphate from the ammonia moiety of glutamine, carbonate, and phosphate donated by ATP, constituting the first step of 2 biosynthetic pathways, one leading to arginine and/or urea and the other to pyrimidine nucleotides. The small subunit (glutamine amidotransferase) binds and cleaves glutamine to supply the large subunit with the substrate ammonia. In Acinetobacter baylyi (strain ATCC 33305 / BD413 / ADP1), this protein is Carbamoyl phosphate synthase small chain.